The sequence spans 262 residues: Acyl-[acyl-carrier-protein]--UDP-N-acetylglucosamine O-acyltransferase (262 aa).

Belongs to the transferase hexapeptide repeat family. LpxA subfamily. Homotrimer.

Its subcellular location is the cytoplasm. It catalyses the reaction a (3R)-hydroxyacyl-[ACP] + UDP-N-acetyl-alpha-D-glucosamine = a UDP-3-O-[(3R)-3-hydroxyacyl]-N-acetyl-alpha-D-glucosamine + holo-[ACP]. It participates in glycolipid biosynthesis; lipid IV(A) biosynthesis; lipid IV(A) from (3R)-3-hydroxytetradecanoyl-[acyl-carrier-protein] and UDP-N-acetyl-alpha-D-glucosamine: step 1/6. Functionally, involved in the biosynthesis of lipid A, a phosphorylated glycolipid that anchors the lipopolysaccharide to the outer membrane of the cell. The sequence is that of Acyl-[acyl-carrier-protein]--UDP-N-acetylglucosamine O-acyltransferase from Klebsiella pneumoniae (strain 342).